A 282-amino-acid polypeptide reads, in one-letter code: 3-methyl-2-oxobutanoate hydroxymethyltransferase (282 aa).

2 residues coordinate Mg(2+): Asp63 and Asp102. 3-methyl-2-oxobutanoate-binding positions include 63 to 64 (DS), Asp102, and Lys132. Position 134 (Glu134) interacts with Mg(2+). Residue Glu200 is the Proton acceptor of the active site.

Belongs to the PanB family. As to quaternary structure, homodecamer; pentamer of dimers. The cofactor is Mg(2+).

It localises to the cytoplasm. The enzyme catalyses 3-methyl-2-oxobutanoate + (6R)-5,10-methylene-5,6,7,8-tetrahydrofolate + H2O = 2-dehydropantoate + (6S)-5,6,7,8-tetrahydrofolate. The protein operates within cofactor biosynthesis; (R)-pantothenate biosynthesis; (R)-pantoate from 3-methyl-2-oxobutanoate: step 1/2. Catalyzes the reversible reaction in which hydroxymethyl group from 5,10-methylenetetrahydrofolate is transferred onto alpha-ketoisovalerate to form ketopantoate. In Mycobacterium sp. (strain JLS), this protein is 3-methyl-2-oxobutanoate hydroxymethyltransferase.